The primary structure comprises 178 residues: Gluconokinase (178 aa).

An ATP-binding site is contributed by 19–26; it reads GVSGTGKT.

The protein belongs to the gluconokinase GntK/GntV family. As to quaternary structure, monomer.

The enzyme catalyses D-gluconate + ATP = 6-phospho-D-gluconate + ADP + H(+). It functions in the pathway carbohydrate acid metabolism; D-gluconate degradation. With respect to regulation, activated by magnesium. Phosphorylates gluconate to 6-phosphogluconate. The sequence is that of Gluconokinase from Gluconobacter oxydans (strain 621H) (Gluconobacter suboxydans).